The sequence spans 182 residues: Bifunctional protein PyrR (182 aa).

Residues 98–110 carry the PRPP-binding motif; that stretch reads VVLVDDVLFTGRS.

The protein belongs to the purine/pyrimidine phosphoribosyltransferase family. PyrR subfamily.

The enzyme catalyses UMP + diphosphate = 5-phospho-alpha-D-ribose 1-diphosphate + uracil. Regulates the transcription of the pyrimidine nucleotide (pyr) operon in response to exogenous pyrimidines. Functionally, also displays a weak uracil phosphoribosyltransferase activity which is not physiologically significant. This chain is Bifunctional protein PyrR, found in Dehalococcoides mccartyi (strain ATCC BAA-2100 / JCM 16839 / KCTC 5957 / BAV1).